The sequence spans 433 residues: Adenylosuccinate synthetase (433 aa).

Residues G11 to K17 and G39 to T41 each bind GTP. The Proton acceptor role is filled by D12. Mg(2+) is bound by residues D12 and G39. IMP is bound by residues D12–K15, N37–H40, T134, R148, N230, T245, and R309. Catalysis depends on H40, which acts as the Proton donor. V305–R311 contributes to the substrate binding site. Residues R311, K337–D339, and G419–G421 contribute to the GTP site.

The protein belongs to the adenylosuccinate synthetase family. In terms of assembly, homodimer. Mg(2+) is required as a cofactor.

It localises to the cytoplasm. It carries out the reaction IMP + L-aspartate + GTP = N(6)-(1,2-dicarboxyethyl)-AMP + GDP + phosphate + 2 H(+). Its pathway is purine metabolism; AMP biosynthesis via de novo pathway; AMP from IMP: step 1/2. Functionally, plays an important role in the de novo pathway and in the salvage pathway of purine nucleotide biosynthesis. Catalyzes the first committed step in the biosynthesis of AMP from IMP. The sequence is that of Adenylosuccinate synthetase from Saccharomyces cerevisiae (strain YJM789) (Baker's yeast).